The primary structure comprises 252 residues: 7-cyano-7-deazaguanine synthase (252 aa).

An ATP-binding site is contributed by 22 to 32 (FSGGQDSTTCL). Residues C215, C230, C233, and C236 each coordinate Zn(2+).

This sequence belongs to the QueC family. It depends on Zn(2+) as a cofactor.

The enzyme catalyses 7-carboxy-7-deazaguanine + NH4(+) + ATP = 7-cyano-7-deazaguanine + ADP + phosphate + H2O + H(+). It participates in purine metabolism; 7-cyano-7-deazaguanine biosynthesis. Its function is as follows. Catalyzes the ATP-dependent conversion of 7-carboxy-7-deazaguanine (CDG) to 7-cyano-7-deazaguanine (preQ(0)). This Granulibacter bethesdensis (strain ATCC BAA-1260 / CGDNIH1) protein is 7-cyano-7-deazaguanine synthase.